The chain runs to 595 residues: Aspartate--tRNA(Asp/Asn) ligase (595 aa).

Glu175 contacts L-aspartate. The aspartate stretch occupies residues 199–202 (QQYK). Positions 221 and 454 each coordinate L-aspartate. Residue 221–223 (RDE) participates in ATP binding. Glu488 serves as a coordination point for ATP. Arg495 serves as a coordination point for L-aspartate. 540 to 543 (GIDR) is an ATP binding site.

Belongs to the class-II aminoacyl-tRNA synthetase family. Type 1 subfamily. Homodimer.

It is found in the cytoplasm. The enzyme catalyses tRNA(Asx) + L-aspartate + ATP = L-aspartyl-tRNA(Asx) + AMP + diphosphate. Aspartyl-tRNA synthetase with relaxed tRNA specificity since it is able to aspartylate not only its cognate tRNA(Asp) but also tRNA(Asn). Reaction proceeds in two steps: L-aspartate is first activated by ATP to form Asp-AMP and then transferred to the acceptor end of tRNA(Asp/Asn). This chain is Aspartate--tRNA(Asp/Asn) ligase, found in Sinorhizobium medicae (strain WSM419) (Ensifer medicae).